A 323-amino-acid polypeptide reads, in one-letter code: Rhazimal reductase 2 (323 aa).

Aspartate 53 lines the NADP(+) pocket. Residue tyrosine 58 is the Proton donor of the active site. NADP(+)-binding positions include serine 167–asparagine 168, glutamine 189, tryptophan 215–serine 220, and aspartate 289–arginine 297.

It belongs to the aldo/keto reductase family. As to quaternary structure, monomer.

The enzyme catalyses rhazimol + NADP(+) = rhazimal + NADPH + 2 H(+). The protein operates within alkaloid biosynthesis. In terms of biological role, oxidoreductase involved in the biosynthesis of akuammilan monoterpene indole alkaloids (MIAs) natural products, components with various biological properties such as antidiabetic, antibacterial, anti-inflammatory, anticancer, and antimalarial activities. Catalyzes the conversion of rhazimal to rhazimol. This chain is Rhazimal reductase 2, found in Alstonia scholaris (Dogbane).